The sequence spans 472 residues: Methanethiol oxidase (472 aa).

Belongs to the selenium-binding protein family.

The protein resides in the nucleus. It is found in the cytoplasm. The protein localises to the cytosol. It localises to the membrane. It carries out the reaction methanethiol + O2 + H2O = hydrogen sulfide + formaldehyde + H2O2 + H(+). Its pathway is organosulfur degradation. Functionally, catalyzes the oxidation of methanethiol, an organosulfur compound known to be produced in substantial amounts by gut bacteria. Selenium-binding protein which may be involved in the sensing of reactive xenobiotics in the cytoplasm. May be involved in intra-Golgi protein transport. The chain is Methanethiol oxidase (selenbp1) from Xenopus tropicalis (Western clawed frog).